The primary structure comprises 411 residues: LL-diaminopimelate aminotransferase (411 aa).

Residues Y15 and G42 each coordinate substrate. Pyridoxal 5'-phosphate is bound by residues Y72, 108–109 (SK), Y132, N187, Y218, and 246–248 (SFS). 3 residues coordinate substrate: K109, Y132, and N187. An N6-(pyridoxal phosphate)lysine modification is found at K249. The pyridoxal 5'-phosphate site is built by R257 and N292. N292 and R388 together coordinate substrate.

It belongs to the class-I pyridoxal-phosphate-dependent aminotransferase family. LL-diaminopimelate aminotransferase subfamily. In terms of assembly, homodimer. Requires pyridoxal 5'-phosphate as cofactor.

It catalyses the reaction (2S,6S)-2,6-diaminopimelate + 2-oxoglutarate = (S)-2,3,4,5-tetrahydrodipicolinate + L-glutamate + H2O + H(+). It functions in the pathway amino-acid biosynthesis; L-lysine biosynthesis via DAP pathway; LL-2,6-diaminopimelate from (S)-tetrahydrodipicolinate (aminotransferase route): step 1/1. Involved in the synthesis of meso-diaminopimelate (m-DAP or DL-DAP), required for both lysine and peptidoglycan biosynthesis. Catalyzes the direct conversion of tetrahydrodipicolinate to LL-diaminopimelate. This Synechococcus elongatus (strain ATCC 33912 / PCC 7942 / FACHB-805) (Anacystis nidulans R2) protein is LL-diaminopimelate aminotransferase.